The primary structure comprises 300 residues: MTLNQRDQFFSHCHGHPQKPMEIYMFVDPLSPECWALEPAIKKLKIRYGRFFTLRIIAACSITALNVQKRKKRRLAEAWEKIACRSGMSCDGTLLHDKALSAPYLASLALKAAELQGRKAGLQFLRCMQESLFLNQQDITEEQVLLAIAEHTQLDLEEFKRDLHSQSAVKALQCDLKIAAEMEVASVPTLTFFNSLREGEGLKVTGNYSYEIYEEVLFEMLGDEPKPSQTPPLELFIEYFQFVADKEIAVVYDWTLEQVEREMKKLAFARKVERVEAKHGMFWRYINEHHDAGPLYQCEK.

Belongs to the SpxH family. As to quaternary structure, interacts with Spx.

The protein resides in the cytoplasm. Its function is as follows. Adapter protein required for efficient degradation of Spx by ClpXP under non-stress conditions. Interaction with Spx stabilizes Spx and exposes the C-terminus of Spx for recognition and proteolysis by ClpXP. In Bacillus licheniformis (strain ATCC 14580 / DSM 13 / JCM 2505 / CCUG 7422 / NBRC 12200 / NCIMB 9375 / NCTC 10341 / NRRL NRS-1264 / Gibson 46), this protein is ClpXP adapter protein SpxH.